A 366-amino-acid chain; its full sequence is 1-aminocyclopropane-1-carboxylate oxidase homolog 12 (366 aa).

Positions 215-314 constitute a Fe2OG dioxygenase domain; sequence KTLLMICHYY…RISVASFFSS (100 aa). Fe cation contacts are provided by histidine 239, aspartate 241, and histidine 295. Arginine 305 is a 2-oxoglutarate binding site.

The protein belongs to the iron/ascorbate-dependent oxidoreductase family. The cofactor is Fe(2+).

The protein is 1-aminocyclopropane-1-carboxylate oxidase homolog 12 of Arabidopsis thaliana (Mouse-ear cress).